We begin with the raw amino-acid sequence, 875 residues long: Alanine--tRNA ligase (875 aa).

4 residues coordinate Zn(2+): H564, H568, C666, and H670.

Belongs to the class-II aminoacyl-tRNA synthetase family. In terms of assembly, homotetramer. Requires Zn(2+) as cofactor.

The protein resides in the cytoplasm. The enzyme catalyses tRNA(Ala) + L-alanine + ATP = L-alanyl-tRNA(Ala) + AMP + diphosphate. Its function is as follows. Catalyzes the attachment of alanine to tRNA(Ala) in a two-step reaction: alanine is first activated by ATP to form Ala-AMP and then transferred to the acceptor end of tRNA(Ala). Also edits incorrectly charged Ser-tRNA(Ala) and Gly-tRNA(Ala) via its editing domain. This chain is Alanine--tRNA ligase, found in Citrobacter koseri (strain ATCC BAA-895 / CDC 4225-83 / SGSC4696).